A 123-amino-acid chain; its full sequence is Small ribosomal subunit protein uS13 (123 aa).

A disordered region spans residues 97–123; that stretch reads PVRGQRTRSNARTRKGPRPSRIKKKGK. The span at 101 to 123 shows a compositional bias: basic residues; sequence QRTRSNARTRKGPRPSRIKKKGK.

This sequence belongs to the universal ribosomal protein uS13 family. Part of the 30S ribosomal subunit. Forms a loose heterodimer with protein S19. Forms two bridges to the 50S subunit in the 70S ribosome.

Its function is as follows. Located at the top of the head of the 30S subunit, it contacts several helices of the 16S rRNA. In the 70S ribosome it contacts the 23S rRNA (bridge B1a) and protein L5 of the 50S subunit (bridge B1b), connecting the 2 subunits; these bridges are implicated in subunit movement. Contacts the tRNAs in the A and P-sites. In Fervidobacterium nodosum (strain ATCC 35602 / DSM 5306 / Rt17-B1), this protein is Small ribosomal subunit protein uS13.